A 173-amino-acid chain; its full sequence is NADH-ubiquinone oxidoreductase chain 6 (173 aa).

5 helical membrane-spanning segments follow: residues 1–21 (MTYF…AVAS), 27–47 (YGVV…MSLG), 48–68 (MSFV…VVFV), 87–107 (VVGY…VGGL), and 139–159 (CGVG…FVVL).

Belongs to the complex I subunit 6 family.

The protein resides in the mitochondrion membrane. It carries out the reaction a ubiquinone + NADH + 5 H(+)(in) = a ubiquinol + NAD(+) + 4 H(+)(out). Its function is as follows. Core subunit of the mitochondrial membrane respiratory chain NADH dehydrogenase (Complex I) that is believed to belong to the minimal assembly required for catalysis. Complex I functions in the transfer of electrons from NADH to the respiratory chain. The immediate electron acceptor for the enzyme is believed to be ubiquinone. This Synthliboramphus antiquus (Ancient murrelet) protein is NADH-ubiquinone oxidoreductase chain 6 (MT-ND6).